Reading from the N-terminus, the 181-residue chain is Adenylyl-sulfate kinase (181 aa).

Residue 12 to 19 (GLSGAGKS) participates in ATP binding. The active-site Phosphoserine intermediate is the S86.

It belongs to the APS kinase family.

It carries out the reaction adenosine 5'-phosphosulfate + ATP = 3'-phosphoadenylyl sulfate + ADP + H(+). It participates in sulfur metabolism; hydrogen sulfide biosynthesis; sulfite from sulfate: step 2/3. Its function is as follows. Catalyzes the synthesis of activated sulfate. This Microcystis aeruginosa (strain NIES-843 / IAM M-2473) protein is Adenylyl-sulfate kinase.